Here is a 97-residue protein sequence, read N- to C-terminus: UPF0125 protein plu3376 (97 aa).

The protein belongs to the UPF0125 (RnfH) family.

The chain is UPF0125 protein plu3376 from Photorhabdus laumondii subsp. laumondii (strain DSM 15139 / CIP 105565 / TT01) (Photorhabdus luminescens subsp. laumondii).